Reading from the N-terminus, the 65-residue chain is Large ribosomal subunit protein uL29 (65 aa).

The protein belongs to the universal ribosomal protein uL29 family.

The chain is Large ribosomal subunit protein uL29 from Leptothrix cholodnii (strain ATCC 51168 / LMG 8142 / SP-6) (Leptothrix discophora (strain SP-6)).